The chain runs to 202 residues: MSDDSSSPLTTLKILIIGESGVGKSSLMLRFVDDVFDPEQAATIGVDFRVTSMTIDGNRVKLAIWDTAGQERFRTLTPSYYRGAQGVICVYDVTSRSSFEKLKHWMTEVDTYCTNDNVIKMMVANKIDMPNRTVTREEGLKFAKRHRTLFIEASAKTKEGVQCTFEELIEKIIQTPDLWDNDRPTFRLGQPTDTSSGNLCGC.

GTP-binding residues include Ser-20, Gly-23, Lys-24, Ser-25, Ser-26, Asp-37, Pro-38, Thr-43, Gly-69, Lys-126, Asp-128, and Ala-155. Positions 40-48 match the Effector region motif; that stretch reads QAATIGVDF. The interval 183 to 202 is disordered; the sequence is RPTFRLGQPTDTSSGNLCGC. Residues 191 to 202 show a composition bias toward polar residues; sequence PTDTSSGNLCGC. S-geranylgeranyl cysteine attachment occurs at residues Cys-200 and Cys-202. Cysteine methyl ester is present on Cys-202.

The protein belongs to the small GTPase superfamily. Rab family.

It catalyses the reaction GTP + H2O = GDP + phosphate + H(+). Its function is as follows. The small GTPases Rab are key regulators of intracellular membrane trafficking, from the formation of transport vesicles to their fusion with membranes. Rabs cycle between an inactive GDP-bound form and an active GTP-bound form that is able to recruit to membranes different sets of downstream effectors directly responsible for vesicle formation, movement, tethering and fusion. Plays a role in apical endocytosis/recycling. May be implicated in transport between the plasma membrane and early endosomes. The sequence is that of Ras-related protein Rab-18 (rab-18) from Caenorhabditis briggsae.